The primary structure comprises 294 residues: Potassium-transporting ATPase subunit beta (294 aa).

Topologically, residues 1-36 are cytoplasmic; sequence MAALQEKKSCSQRMAEFRHYCWNPDTGQMLGRTPAR. Residues 37-57 form a helical; Signal-anchor for type II membrane protein membrane-spanning segment; it reads WVWISLYYAGFYVVMTGLFAL. At 58 to 294 the chain is on the extracellular side; that stretch reads CIYVLMQTID…KVEFKLTIQK (237 aa). N-linked (GlcNAc...) asparagine glycosylation is found at Asn99, Asn103, Asn130, Asn146, and Asn161. Cysteines 131 and 152 form a disulfide. Cys162 and Cys178 form a disulfide bridge. N-linked (GlcNAc...) asparagine glycosylation is found at Asn193 and Asn225. Positions 194-294 are immunoglobulin-like; sequence NTAPRVDCTF…KVEFKLTIQK (101 aa). Cys201 and Cys266 form a disulfide bridge.

The protein belongs to the X(+)/potassium ATPases subunit beta family. In terms of assembly, the ATPase pump is composed of two subunits: alpha (catalytic) and beta (regulatory). Interacts with alpha subunit ATP12A; this interaction is required for the formation of a functionally active pump and targeting at the plasma membrane. Interacts (via N-terminus) with alpha subunit ATP4A (via the P-domain). Post-translationally, N-glycosylation is necessary for assembly and functional expression of the pump at the plasma membrane. In terms of tissue distribution, expressed in parietal cells (at protein level).

The protein localises to the apical cell membrane. The protein resides in the cell membrane. Functionally, the beta subunit of the gastric H(+)/K(+) ATPase pump which transports H(+) ions in exchange for K(+) ions across the apical membrane of parietal cells. Plays a structural and regulatory role in the assembly and membrane targeting of a functionally active pump. Within a transport cycle, the transfer of a H(+) ion across the membrane is coupled to ATP hydrolysis and is associated with a transient phosphorylation of the alpha subunit that shifts the pump conformation from inward-facing (E1) to outward-facing state (E2). Interacts with the phosphorylation domain of the alpha subunit and functions as a ratchet, stabilizing the lumenal-open E2 conformation and preventing the reverse reaction of the transport cycle. The chain is Potassium-transporting ATPase subunit beta (Atp4b) from Mus musculus (Mouse).